A 499-amino-acid polypeptide reads, in one-letter code: Lysine--tRNA ligase (499 aa).

Mg(2+)-binding residues include Glu407 and Glu414.

The protein belongs to the class-II aminoacyl-tRNA synthetase family. In terms of assembly, homodimer. It depends on Mg(2+) as a cofactor.

It is found in the cytoplasm. It catalyses the reaction tRNA(Lys) + L-lysine + ATP = L-lysyl-tRNA(Lys) + AMP + diphosphate. This is Lysine--tRNA ligase from Lactiplantibacillus plantarum (strain ATCC BAA-793 / NCIMB 8826 / WCFS1) (Lactobacillus plantarum).